Here is a 129-residue protein sequence, read N- to C-terminus: Large ribosomal subunit protein uL22 (129 aa).

The protein belongs to the universal ribosomal protein uL22 family. In terms of assembly, part of the 50S ribosomal subunit.

Functionally, this protein binds specifically to 23S rRNA; its binding is stimulated by other ribosomal proteins, e.g. L4, L17, and L20. It is important during the early stages of 50S assembly. It makes multiple contacts with different domains of the 23S rRNA in the assembled 50S subunit and ribosome. The globular domain of the protein is located near the polypeptide exit tunnel on the outside of the subunit, while an extended beta-hairpin is found that lines the wall of the exit tunnel in the center of the 70S ribosome. In Onion yellows phytoplasma (strain OY-M), this protein is Large ribosomal subunit protein uL22.